The following is a 141-amino-acid chain: Hemoglobin subunit alpha-1/2 (141 aa).

The 141-residue stretch at 1-141 (VLSPADKTNV…VSTVLTSKYR (141 aa)) folds into the Globin domain. A Phosphoserine modification is found at S3. K7 bears the N6-succinyllysine mark. At T8 the chain carries Phosphothreonine. K11 carries the N6-succinyllysine modification. K16 bears the N6-acetyllysine; alternate mark. Position 16 is an N6-succinyllysine; alternate (K16). Y24 carries the post-translational modification Phosphotyrosine. S35 bears the Phosphoserine mark. Residue K40 is modified to N6-succinyllysine. At S49 the chain carries Phosphoserine. H58 serves as a coordination point for O2. H87 serves as a coordination point for heme b. Residue S102 is modified to Phosphoserine. Position 108 is a phosphothreonine (T108). Phosphoserine occurs at positions 124 and 131. Phosphothreonine occurs at positions 134 and 137. The residue at position 138 (S138) is a Phosphoserine.

The protein belongs to the globin family. In terms of assembly, heterotetramer of two alpha chains and two beta chains. In terms of tissue distribution, red blood cells.

Functionally, involved in oxygen transport from the lung to the various peripheral tissues. This chain is Hemoglobin subunit alpha-1/2, found in Macaca sinica (Toque macaque).